Here is a 244-residue protein sequence, read N- to C-terminus: 5'-deoxynucleotidase (244 aa).

It carries out the reaction a 2'-deoxyribonucleoside 5'-phosphate + H2O = a 2'-deoxyribonucleoside + phosphate. Its function is as follows. Following host DNA degradation, is responsible for the degradation of 5'-dNMP's to deoxynucleosides that can be further excreted. Active on deoxynucleoside 5'-monophosphates but not active as a phosphatase on ribonucleotides, deoxynucleoside 5'-triphosphates, deoxynucleoside 3'-monophosphates, or deoxyoligonucleotides. This is 5'-deoxynucleotidase (dmp) from Escherichia coli (Enterobacteria phage T5).